Consider the following 578-residue polypeptide: NADH-quinone oxidoreductase subunit C/D (578 aa).

An NADH dehydrogenase I subunit C region spans residues 1 to 167 (MILSLFKLFG…DEFYFTKQKE (167 aa)). The tract at residues 192 to 578 (EYMFLNFGPN…IDFVMSDVDR (387 aa)) is NADH dehydrogenase I subunit D.

This sequence in the N-terminal section; belongs to the complex I 30 kDa subunit family. It in the C-terminal section; belongs to the complex I 49 kDa subunit family. NDH-1 is composed of 13 different subunits. Subunits NuoB, CD, E, F, and G constitute the peripheral sector of the complex.

The protein resides in the cell inner membrane. The catalysed reaction is a quinone + NADH + 5 H(+)(in) = a quinol + NAD(+) + 4 H(+)(out). In terms of biological role, NDH-1 shuttles electrons from NADH, via FMN and iron-sulfur (Fe-S) centers, to quinones in the respiratory chain. The immediate electron acceptor for the enzyme in this species is believed to be ubiquinone. Couples the redox reaction to proton translocation (for every two electrons transferred, four hydrogen ions are translocated across the cytoplasmic membrane), and thus conserves the redox energy in a proton gradient. This is NADH-quinone oxidoreductase subunit C/D from Buchnera aphidicola subsp. Cinara cedri (strain Cc).